The chain runs to 117 residues: Large ribosomal subunit protein uL24 (117 aa).

Positions 1-10 (MSKQPRKQRK) are enriched in basic residues. Residues 1 to 28 (MSKQPRKQRKALYTAPLHKRHNSMSVHL) are disordered.

Belongs to the universal ribosomal protein uL24 family. Part of the 50S ribosomal subunit.

In terms of biological role, one of two assembly initiator proteins, it binds directly to the 5'-end of the 23S rRNA, where it nucleates assembly of the 50S subunit. Located at the polypeptide exit tunnel on the outside of the subunit. This chain is Large ribosomal subunit protein uL24, found in Methanosphaera stadtmanae (strain ATCC 43021 / DSM 3091 / JCM 11832 / MCB-3).